A 527-amino-acid chain; its full sequence is Thymidine kinase (527 aa).

The segment at 1–57 (MTGRGQPPKKNDTYDYPRKQPPKNGSYDNYDYPTSTKTRSTNKQRKDSNYPPRETIF) is disordered. Positions 9-18 (KKNDTYDYPR) are enriched in basic and acidic residues. Polar residues predominate over residues 32–41 (YPTSTKTRST). 216–223 (GSIGVGKT) is an ATP binding site. The active-site Proton acceptor is the Glu-243. 2 residues coordinate substrate: Tyr-260 and Gln-281. An ATP-binding site is contributed by Arg-368. Substrate is bound at residue Arg-374.

Belongs to the herpesviridae thymidine kinase family. As to quaternary structure, homodimer.

The enzyme catalyses thymidine + ATP = dTMP + ADP + H(+). Catalyzes the transfer of the gamma-phospho group of ATP to thymidine to generate dTMP in the salvage pathway of pyrimidine synthesis. The dTMP serves as a substrate for DNA polymerase during viral DNA replication. Allows the virus to be reactivated and to grow in non-proliferative cells lacking a high concentration of phosphorylated nucleic acid precursors. The sequence is that of Thymidine kinase from Saimiriine herpesvirus 2 (strain 11) (SaHV-2).